We begin with the raw amino-acid sequence, 243 residues long: UPF0758 protein Ava_0172 (243 aa).

In terms of domain architecture, MPN spans 113–235 (PIDSPVAAVA…HQSLREVTTL (123 aa)). Zn(2+) is bound by residues His-184, His-186, and Asp-197. The short motif at 184-197 (HNHPSGNVEPSPED) is the JAMM motif element.

Belongs to the UPF0758 family.

The polypeptide is UPF0758 protein Ava_0172 (Trichormus variabilis (strain ATCC 29413 / PCC 7937) (Anabaena variabilis)).